The primary structure comprises 142 residues: Small ribosomal subunit protein uS12 (142 aa).

The protein belongs to the universal ribosomal protein uS12 family.

The chain is Small ribosomal subunit protein uS12 from Tetrahymena thermophila.